Consider the following 61-residue polypeptide: Metallothionein-1C (61 aa).

Residues 1 to 29 (MDPNCSCSTGSSCSCAGSCTCKACRCPSC) form a beta region. Residues C5, C7, C13, C15, C19, C21, C24, C26, C29, C33, C34, C36, C37, C41, C44, C48, C50, C57, C59, and C60 each contribute to the a divalent metal cation site. The tract at residues 30–61 (KKSCCSCCPVGCAKCAQGCICKGASDKCSCCA) is alpha.

Belongs to the metallothionein superfamily. Type 1 family.

Functionally, metallothioneins have a high content of cysteine residues that bind various heavy metals; these proteins are transcriptionally regulated by both heavy metals and glucocorticoids. The polypeptide is Metallothionein-1C (MT1C) (Ovis aries (Sheep)).